We begin with the raw amino-acid sequence, 984 residues long: UPF0592 protein YDL073W (984 aa).

The segment at 675-712 (KNHKIMDGYEGGQENEDNDEDSEDSGSHKNKRKEGNSS) is disordered. Over residues 687 to 698 (QENEDNDEDSED) the composition is skewed to acidic residues.

Belongs to the UPF0592 family.

This chain is UPF0592 protein YDL073W, found in Saccharomyces cerevisiae (strain ATCC 204508 / S288c) (Baker's yeast).